Here is an 843-residue protein sequence, read N- to C-terminus: Protein P (843 aa).

The segment at 1-177 is terminal protein domain (TP); the sequence is MPLSYQHFRK…FCGSPYSWEQ (177 aa). The spacer stretch occupies residues 178–346; the sequence is ELQHGRLVFQ…YCLTHIVNLL (169 aa). Disordered stretches follow at residues 220–273 and 289–316; these read QSRL…SSTS and LSTSKRQSSSGHAVEFHNIPPSSARSQS. Positions 289–299 are enriched in polar residues; sequence LSTSKRQSSSG. The segment at 347–690 is polymerase/reverse transcriptase domain (RT); that stretch reads EDWGPCTEHG…YLNLYPVARQ (344 aa). A Reverse transcriptase domain is found at 357–600; it reads EHNIRIPRTP…YSLNFMGYVI (244 aa). Positions 429, 551, and 552 each coordinate Mg(2+).

This sequence belongs to the hepadnaviridae P protein family.

It catalyses the reaction DNA(n) + a 2'-deoxyribonucleoside 5'-triphosphate = DNA(n+1) + diphosphate. The catalysed reaction is Endonucleolytic cleavage to 5'-phosphomonoester.. With respect to regulation, activated by host HSP70 and HSP40 in vitro to be able to bind the epsilon loop of the pgRNA. Because deletion of the RNase H region renders the protein partly chaperone-independent, the chaperones may be needed indirectly to relieve occlusion of the RNA-binding site by this domain. Inhibited by several reverse-transcriptase inhibitors: Lamivudine, Adefovir and Entecavir. In terms of biological role, multifunctional enzyme that converts the viral RNA genome into dsDNA in viral cytoplasmic capsids. This enzyme displays a DNA polymerase activity that can copy either DNA or RNA templates, and a ribonuclease H (RNase H) activity that cleaves the RNA strand of RNA-DNA heteroduplexes in a partially processive 3'- to 5'-endonucleasic mode. Neo-synthesized pregenomic RNA (pgRNA) are encapsidated together with the P protein, and reverse-transcribed inside the nucleocapsid. Initiation of reverse-transcription occurs first by binding the epsilon loop on the pgRNA genome, and is initiated by protein priming, thereby the 5'-end of (-)DNA is covalently linked to P protein. Partial (+)DNA is synthesized from the (-)DNA template and generates the relaxed circular DNA (RC-DNA) genome. After budding and infection, the RC-DNA migrates in the nucleus, and is converted into a plasmid-like covalently closed circular DNA (cccDNA). The activity of P protein does not seem to be necessary for cccDNA generation, and is presumably released from (+)DNA by host nuclear DNA repair machinery. The polypeptide is Protein P (Hepatitis B virus genotype C subtype ad (isolate Japan/S-179/1988) (HBV-C)).